Reading from the N-terminus, the 1096-residue chain is Cohesin subunit scc-3 (1096 aa).

Positions 1–21 (MSETPTDQSPQRMSTRNQARV) are enriched in polar residues. Disordered stretches follow at residues 1 to 53 (MSET…KKRA) and 67 to 106 (NLNNFSTPPKRGRPRGGGLGSARGGRAPMVRRTTTEESAE). Residues 261–312 (IELTQSKEKTSKQIEAEKAKLKNNSAGNEKYEALVAQRTQTEERAEEIRQII) are a coiled coil. The SCD domain occupies 320 to 405 (FVHRYRDVVP…NKFKDRLVSM (86 aa)). The tract at residues 1057–1096 (DNMSVRSGMTVTSNATMRSTASSTRGRGRGRGRSRIADDF) is disordered. Over residues 1060–1073 (SVRSGMTVTSNATM) the composition is skewed to polar residues.

The protein belongs to the SCC3 family. As to quaternary structure, component of the cohesin complex, composed of the smc-1 and smc-3 heterodimer attached via their hinge domain, scc-1 which links them, and scc-3. Interacts with scc-1, smc-1 and tim-1. Expressed in gonadal cells.

The protein localises to the nucleus. It is found in the chromosome. Its function is as follows. Component of the cohesin complex, a complex required for the cohesion of sister chromatids after DNA replication. The cohesin complex apparently forms a large proteinaceous ring within which sister chromatids can be trapped. At anaphase, the scc-1 subunit of the complex is cleaved and dissociates from chromatin, allowing sister chromatids to segregate. The cohesin complex may also play a role in spindle pole assembly during mitosis. Plays an essential role in cell division during embryonic development. Required for the assembly of the synaptonemal complex between homologous chromosomes to promote sister chromatid cohesion during mitosis and meiosis. Has a role in stabilization of homologous chromosome associations during meiotic synapsis. Required for chromosome segregation during mitosis and meiosis. Plays a role in DNA double-strand break (DSB) repair during meiotic recombination and promotes the assembly of the 9-1-1 cell-cycle checkpoint response complex which is required for inducing apoptosis in response to DNA damage, at DNA damage sites. The protein is Cohesin subunit scc-3 of Caenorhabditis elegans.